The following is a 317-amino-acid chain: Transaldolase (317 aa).

Catalysis depends on K126, which acts as the Schiff-base intermediate with substrate.

Belongs to the transaldolase family. Type 1 subfamily. In terms of assembly, homodimer.

It is found in the cytoplasm. It catalyses the reaction D-sedoheptulose 7-phosphate + D-glyceraldehyde 3-phosphate = D-erythrose 4-phosphate + beta-D-fructose 6-phosphate. Its pathway is carbohydrate degradation; pentose phosphate pathway; D-glyceraldehyde 3-phosphate and beta-D-fructose 6-phosphate from D-ribose 5-phosphate and D-xylulose 5-phosphate (non-oxidative stage): step 2/3. Transaldolase is important for the balance of metabolites in the pentose-phosphate pathway. This chain is Transaldolase, found in Burkholderia ambifaria (strain MC40-6).